Reading from the N-terminus, the 867-residue chain is Protein translocase subunit SecA (867 aa).

ATP is bound by residues Gln85, 103-107 (GEGKT), and Asp491.

This sequence belongs to the SecA family. In terms of assembly, monomer and homodimer. Part of the essential Sec protein translocation apparatus which comprises SecA, SecYEG and auxiliary proteins SecDF. Other proteins may also be involved.

It is found in the cell membrane. Its subcellular location is the cytoplasm. The enzyme catalyses ATP + H2O + cellular proteinSide 1 = ADP + phosphate + cellular proteinSide 2.. Functionally, part of the Sec protein translocase complex. Interacts with the SecYEG preprotein conducting channel. Has a central role in coupling the hydrolysis of ATP to the transfer of proteins into and across the cell membrane, serving as an ATP-driven molecular motor driving the stepwise translocation of polypeptide chains across the membrane. The sequence is that of Protein translocase subunit SecA from Mycoplasmopsis pulmonis (strain UAB CTIP) (Mycoplasma pulmonis).